The chain runs to 121 residues: Small ribosomal subunit protein uS13 (121 aa).

A disordered region spans residues 96 to 121; that stretch reads PVRGQNTKNNARTRKGKAVAIAGKKK. The span at 106 to 121 shows a compositional bias: basic residues; sequence ARTRKGKAVAIAGKKK.

It belongs to the universal ribosomal protein uS13 family. Part of the 30S ribosomal subunit. Forms a loose heterodimer with protein S19. Forms two bridges to the 50S subunit in the 70S ribosome.

Located at the top of the head of the 30S subunit, it contacts several helices of the 16S rRNA. In the 70S ribosome it contacts the 23S rRNA (bridge B1a) and protein L5 of the 50S subunit (bridge B1b), connecting the 2 subunits; these bridges are implicated in subunit movement. Contacts the tRNAs in the A and P-sites. The polypeptide is Small ribosomal subunit protein uS13 (Streptococcus agalactiae serotype Ia (strain ATCC 27591 / A909 / CDC SS700)).